The primary structure comprises 115 residues: Large ribosomal subunit protein bL20 (115 aa).

It belongs to the bacterial ribosomal protein bL20 family.

Its function is as follows. Binds directly to 23S ribosomal RNA and is necessary for the in vitro assembly process of the 50S ribosomal subunit. It is not involved in the protein synthesizing functions of that subunit. In Synechococcus sp. (strain CC9311), this protein is Large ribosomal subunit protein bL20.